Consider the following 42-residue polypeptide: Photosystem I reaction center subunit IX (42 aa).

A helical transmembrane segment spans residues 7–27 (YLSTAPVLATIWFIILAGLLI).

Belongs to the PsaJ family.

It is found in the plastid. Its subcellular location is the chloroplast thylakoid membrane. Functionally, may help in the organization of the PsaE and PsaF subunits. The protein is Photosystem I reaction center subunit IX of Mesostigma viride (Green alga).